Reading from the N-terminus, the 347-residue chain is Protein NDL3 (347 aa).

Belongs to the NDRG family. Interacts with the heterodimers formed by GB1 and GG1, or GB1 and GG2. Interacts with RGS1.

It localises to the cytoplasm. Functionally, involved in a signaling pathway that modulates root auxin transport and auxin gradients. Acts partially by positively regulating the auxin carrier PIN2 and AUX1. Acts, together with GB1 as positive regulator of meristem initiation and branching. GB1 and NDL3 positively regulate basipetal inflorescence auxin transport and modulate MAX2 expression in shoots, which regulates organ and lateral meristem formation by the establishment and maintenance of auxin gradients. The chain is Protein NDL3 from Arabidopsis thaliana (Mouse-ear cress).